The chain runs to 485 residues: D-alanine--D-alanyl carrier protein ligase (485 aa).

144–145 contributes to the ATP binding site; that stretch reads TS. A D-alanine-binding site is contributed by aspartate 189. Residue 284–289 participates in ATP binding; that stretch reads NTYGPT. D-alanine is bound at residue valine 293. Positions 365 and 473 each coordinate ATP. Lysine 473 lines the D-alanine pocket.

This sequence belongs to the ATP-dependent AMP-binding enzyme family. DltA subfamily.

It localises to the cytoplasm. The catalysed reaction is holo-[D-alanyl-carrier protein] + D-alanine + ATP = D-alanyl-[D-alanyl-carrier protein] + AMP + diphosphate. It participates in cell wall biogenesis; lipoteichoic acid biosynthesis. Catalyzes the first step in the D-alanylation of lipoteichoic acid (LTA), the activation of D-alanine and its transfer onto the D-alanyl carrier protein (Dcp) DltC. In an ATP-dependent two-step reaction, forms a high energy D-alanyl-AMP intermediate, followed by transfer of the D-alanyl residue as a thiol ester to the phosphopantheinyl prosthetic group of the Dcp. D-alanylation of LTA plays an important role in modulating the properties of the cell wall in Gram-positive bacteria, influencing the net charge of the cell wall. The chain is D-alanine--D-alanyl carrier protein ligase from Staphylococcus aureus (strain MRSA252).